Consider the following 220-residue polypeptide: Large ribosomal subunit protein uL3 (220 aa).

The disordered stretch occupies residues 61–81; that stretch reads KGSKSNKYANKPAEGHAKKAD.

Belongs to the universal ribosomal protein uL3 family. In terms of assembly, part of the 50S ribosomal subunit. Forms a cluster with proteins L14 and L19.

In terms of biological role, one of the primary rRNA binding proteins, it binds directly near the 3'-end of the 23S rRNA, where it nucleates assembly of the 50S subunit. The chain is Large ribosomal subunit protein uL3 from Staphylococcus epidermidis (strain ATCC 12228 / FDA PCI 1200).